Reading from the N-terminus, the 248-residue chain is UPF0736 protein BCAH187_A1335 (248 aa).

The protein belongs to the UPF0736 family.

The chain is UPF0736 protein BCAH187_A1335 from Bacillus cereus (strain AH187).